A 953-amino-acid polypeptide reads, in one-letter code: Isoleucine--tRNA ligase (953 aa).

The short motif at 61–71 (PYANGALHIGH) is the 'HIGH' region element. Residue Glu-564 coordinates L-isoleucyl-5'-AMP. The 'KMSKS' region motif lies at 605 to 609 (KMSKS). Lys-608 lines the ATP pocket. Residues Cys-922, Cys-925, Cys-942, and Cys-945 each coordinate Zn(2+).

It belongs to the class-I aminoacyl-tRNA synthetase family. IleS type 1 subfamily. Monomer. Zn(2+) is required as a cofactor.

Its subcellular location is the cytoplasm. It catalyses the reaction tRNA(Ile) + L-isoleucine + ATP = L-isoleucyl-tRNA(Ile) + AMP + diphosphate. In terms of biological role, catalyzes the attachment of isoleucine to tRNA(Ile). As IleRS can inadvertently accommodate and process structurally similar amino acids such as valine, to avoid such errors it has two additional distinct tRNA(Ile)-dependent editing activities. One activity is designated as 'pretransfer' editing and involves the hydrolysis of activated Val-AMP. The other activity is designated 'posttransfer' editing and involves deacylation of mischarged Val-tRNA(Ile). This is Isoleucine--tRNA ligase from Thermosynechococcus vestitus (strain NIES-2133 / IAM M-273 / BP-1).